Reading from the N-terminus, the 219-residue chain is 2-hydroxy-3-keto-5-methylthiopentenyl-1-phosphate phosphatase (219 aa).

This sequence belongs to the HAD-like hydrolase superfamily. MtnX family.

The catalysed reaction is 2-hydroxy-5-methylsulfanyl-3-oxopent-1-enyl phosphate + H2O = 1,2-dihydroxy-5-(methylsulfanyl)pent-1-en-3-one + phosphate. Its pathway is amino-acid biosynthesis; L-methionine biosynthesis via salvage pathway; L-methionine from S-methyl-5-thio-alpha-D-ribose 1-phosphate: step 4/6. Its function is as follows. Dephosphorylates 2-hydroxy-3-keto-5-methylthiopentenyl-1-phosphate (HK-MTPenyl-1-P) yielding 1,2-dihydroxy-3-keto-5-methylthiopentene (DHK-MTPene). This Bacillus cereus (strain 03BB102) protein is 2-hydroxy-3-keto-5-methylthiopentenyl-1-phosphate phosphatase.